Consider the following 330-residue polypeptide: Free fatty acid receptor 2 (330 aa).

Topologically, residues 1–12 are extracellular; it reads MLPDWKSSLILM. The helical transmembrane segment at 13-33 threads the bilayer; it reads AYIIIFLTGLPANLLALRAFV. At 34-41 the chain is on the cytoplasmic side; sequence GRIRQPQP. Residues 42–62 form a helical membrane-spanning segment; that stretch reads APVHILLLSLTLADLLLLLLL. The Extracellular segment spans residues 63–84; that stretch reads PFKIIEAASNFRWYLPKVVCAL. A helical membrane pass occupies residues 85–105; it reads TSFGFYSSIYCSTWLLAGISI. The Cytoplasmic portion of the chain corresponds to 106–126; sequence ERYLGVAFPVQYKLSRRPLYG. A helical transmembrane segment spans residues 127-147; that stretch reads VIAALVAWVMSFGHCTIVIIV. Over 148-173 the chain is Extracellular; that stretch reads QYLNTTEQVRSGNEITCYENFTDNQL. N-linked (GlcNAc...) asparagine glycans are attached at residues N151 and N167. Residues 174–194 form a helical membrane-spanning segment; the sequence is DVVLPVRLELCLVLFFIPMAV. At 195–219 the chain is on the cytoplasmic side; the sequence is TIFCYWRFVWIMLSQPLVGAQRRRR. The helical transmembrane segment at 220-240 threads the bilayer; it reads AVGLAVVTLLNFLVCFGPYNV. Topologically, residues 241–255 are extracellular; that stretch reads SHLVGYHQRKSPWWR. The helical transmembrane segment at 256–276 threads the bilayer; sequence SIAVVFSSLNASLDPLLFYFS. Residues 277-330 lie on the Cytoplasmic side of the membrane; the sequence is SSVVRRAFGRGLQVLRNQGSSLLGRRGKDTAEGTNEDRGVGQGEGMPSSDFTTE. Positions 299–330 are disordered; that stretch reads LGRRGKDTAEGTNEDRGVGQGEGMPSSDFTTE. Over residues 302-315 the composition is skewed to basic and acidic residues; it reads RGKDTAEGTNEDRG.

It belongs to the G-protein coupled receptor 1 family. Interacts with FCN1 (via Fibrinogen C-terminal domain). In terms of tissue distribution, expressed at relatively high levels in peripheral blood leukocytes and, to lesser extent, in spleen.

The protein localises to the cell membrane. G protein-coupled receptor that is activated by a major product of dietary fiber digestion, the short chain fatty acids (SCFAs), and that plays a role in the regulation of whole-body energy homeostasis and in intestinal immunity. In omnivorous mammals, the short chain fatty acids acetate, propionate and butyrate are produced primarily by the gut microbiome that metabolizes dietary fibers. SCFAs serve as a source of energy but also act as signaling molecules. That G protein-coupled receptor is probably coupled to the pertussis toxin-sensitive, G(i/o)-alpha family of G proteins but also to the Gq family. Its activation results in the formation of inositol 1,4,5-trisphosphate, the mobilization of intracellular calcium, the phosphorylation of the MAPK3/ERK1 and MAPK1/ERK2 kinases and the inhibition of intracellular cAMP accumulation. May play a role in glucose homeostasis by regulating the secretion of GLP-1, in response to short-chain fatty acids accumulating in the intestine. May also regulate the production of LEP/Leptin, a hormone acting on the central nervous system to inhibit food intake. Finally, may also regulate whole-body energy homeostasis through adipogenesis regulating both differentiation and lipid storage of adipocytes. In parallel to its role in energy homeostasis, may also mediate the activation of the inflammatory and immune responses by SCFA in the intestine, regulating the rapid production of chemokines and cytokines. May also play a role in the resolution of the inflammatory response and control chemotaxis in neutrophils. In addition to SCFAs, may also be activated by the extracellular lectin FCN1 in a process leading to activation of monocytes and inducing the secretion of interleukin-8/IL-8 in response to the presence of microbes. Among SCFAs, the fatty acids containing less than 6 carbons, the most potent activators are probably acetate, propionate and butyrate. Exhibits a SCFA-independent constitutive G protein-coupled receptor activity. This chain is Free fatty acid receptor 2 (FFAR2), found in Homo sapiens (Human).